A 415-amino-acid polypeptide reads, in one-letter code: Putative ankyrin repeat protein FPV034 (415 aa).

ANK repeat units follow at residues 12 to 41 (ICIK…NINT), 43 to 72 (KHFN…NINI), 76 to 105 (VGYT…IINK), 107 to 135 (DYRL…NINV), 139 to 168 (KGYT…DISI), 170 to 200 (NKYS…DVNI), 203 to 232 (HVKA…DVNI), 237 to 266 (GGRT…NVDS), 270 to 299 (VGNT…DINV), and 303 to 332 (FGET…SLKV).

This chain is Putative ankyrin repeat protein FPV034 (ANK2), found in Fowlpox virus (strain NVSL) (FPV).